The chain runs to 177 residues: Large ribosomal subunit protein uL6 (177 aa).

It belongs to the universal ribosomal protein uL6 family. In terms of assembly, part of the 50S ribosomal subunit.

This protein binds to the 23S rRNA, and is important in its secondary structure. It is located near the subunit interface in the base of the L7/L12 stalk, and near the tRNA binding site of the peptidyltransferase center. This Rickettsia peacockii (strain Rustic) protein is Large ribosomal subunit protein uL6.